A 203-amino-acid polypeptide reads, in one-letter code: Endo-type membrane-bound lytic murein transglycosylase A (203 aa).

The first 15 residues, 1-15 (MKLRWFAFLVVILAG), serve as a signal peptide directing secretion. C16 is lipidated: N-palmitoyl cysteine. C16 carries the S-diacylglycerol cysteine lipid modification.

This sequence belongs to the transglycosylase Slt family.

The protein resides in the cell outer membrane. The enzyme catalyses Endolytic cleavage of the (1-&gt;4)-beta-glycosidic linkage between N-acetylmuramic acid (MurNAc) and N-acetylglucosamine (GlcNAc) residues in peptidoglycan with concomitant formation of a 1,6-anhydrobond in the MurNAc residue.. Murein-degrading enzyme. May play a role in recycling of muropeptides during cell elongation and/or cell division. Preferentially cleaves at a distance of more than two disaccharide units from the ends of the glycan chain. The sequence is that of Endo-type membrane-bound lytic murein transglycosylase A from Salmonella paratyphi C (strain RKS4594).